A 206-amino-acid chain; its full sequence is Small ribosomal subunit protein uS4 (206 aa).

Residues 96–156 form the S4 RNA-binding domain; the sequence is GRLDNVVYRM…EKAKKQSRVK (61 aa).

The protein belongs to the universal ribosomal protein uS4 family. Part of the 30S ribosomal subunit. Contacts protein S5. The interaction surface between S4 and S5 is involved in control of translational fidelity.

Its function is as follows. One of the primary rRNA binding proteins, it binds directly to 16S rRNA where it nucleates assembly of the body of the 30S subunit. In terms of biological role, with S5 and S12 plays an important role in translational accuracy. In Serratia proteamaculans (strain 568), this protein is Small ribosomal subunit protein uS4.